The sequence spans 375 residues: Probable G-protein coupled receptor 34 (375 aa).

Topologically, residues 1-54 are extracellular; it reads MTTTSVDSWLCSSHGMHFITNYSDQASQNFSGVPNVTSCPMDEKLLSTVLTTFY. N-linked (GlcNAc...) asparagine glycosylation is found at Asn21, Asn29, and Asn35. A helical membrane pass occupies residues 55-75; it reads SVIFLVGLVGNIIALYVFLGI. Residues 76-81 are Cytoplasmic-facing; that stretch reads HRKRNS. A helical transmembrane segment spans residues 82–102; it reads IQIYLLNVAVADLLLIFCLPF. Topologically, residues 103-121 are extracellular; it reads RIMYHINQNKWTLGVILCK. The cysteines at positions 120 and 197 are disulfide-linked. A helical transmembrane segment spans residues 122 to 142; the sequence is VVGTLFYMNMYISIILLGFIS. The Cytoplasmic portion of the chain corresponds to 143–164; it reads LDRYIKINRSIQQRRAITTKQS. The helical transmembrane segment at 165-185 threads the bilayer; the sequence is IYVCCIVWTVALAGFLTMIIL. The Extracellular segment spans residues 186-209; the sequence is TLKKGGHNSTMCFHYRDRHNAKGE. The N-linked (GlcNAc...) asparagine glycan is linked to Asn193. The helical transmembrane segment at 210 to 230 threads the bilayer; that stretch reads AIFNFVLVVMFWLIFLLIILS. Residues 231–262 are Cytoplasmic-facing; the sequence is YIKIGKNLLRISKRRSKFPNSGKYATTARNSF. Residues 263 to 283 traverse the membrane as a helical segment; that stretch reads IVLIIFTICFVPYHAFRFIYI. The Extracellular portion of the chain corresponds to 284 to 303; it reads SSQLNVSSCYWKEIIHKTNE. Residue Asn288 is glycosylated (N-linked (GlcNAc...) asparagine). A helical transmembrane segment spans residues 304–324; the sequence is IMLVFSSFNSCLDPVMYFLMS. Residues 325–375 lie on the Cytoplasmic side of the membrane; that stretch reads SNIRKIMCQLLFRRFQSEASRSESTSEFKPGHSLHDLSVTVKMPQYSTKGN.

Belongs to the G-protein coupled receptor 1 family. Highly expressed in glial cells such as astrocytes and microglia.

The protein localises to the cell membrane. Its function is as follows. G-protein-coupled receptor of lysophosphatidylserine (LysoPS) that plays different roles in immune response. Acts a damage-sensing receptor that triggers tissue repair upon recognition of dying neutrophils. Mechanistically, apoptotic neutrophils release lysophosphatydilserine that are recognized by type 3 innate lymphoid cells (ILC3s) via GPR34, which activates downstream PI3K-AKT and RAS-ERK signaling pathways leading to STAT3 activation and IL-22 production. Plays an important role in microglial function, controlling morphology and phagocytosis. The sequence is that of Probable G-protein coupled receptor 34 (Gpr34) from Mus musculus (Mouse).